The following is a 228-amino-acid chain: Ribosomal RNA small subunit methyltransferase G (228 aa).

S-adenosyl-L-methionine-binding positions include Gly-70, 121 to 122, and Arg-138; that span reads AE.

This sequence belongs to the methyltransferase superfamily. RNA methyltransferase RsmG family.

It localises to the cytoplasm. Its function is as follows. Specifically methylates the N7 position of a guanine in 16S rRNA. The polypeptide is Ribosomal RNA small subunit methyltransferase G (Thermotoga sp. (strain RQ2)).